Consider the following 139-residue polypeptide: MKDGMRVGERFTHDFVVPPHKTVRHLYPESPEFAEFPEVFATGFMVGLMEWACVRAMAPYLEPGEGSLGTAICVTHTAATPPGLTVTVTAELRSVEGRRLSWRVSAHDGVDEIGSGTHERAVIHLEKFNAKVRQKTPAG.

Residues 40-50 and Gly69 contribute to the substrate site; that span reads FATGFMVGLME. Catalysis depends on residues Thr42 and Glu50. Residues Gly69 and 76–77 contribute to the CoA site; that span reads HT. Residue His76 is part of the active site. Residue Arg120 coordinates substrate.

As to quaternary structure, homodimer.

The catalysed reaction is fluoroacetyl-CoA + H2O = fluoroacetate + CoA + H(+). Functionally, hydrolyzes fluoroacetyl-CoA before it can react with citrate synthase, and thus confers fluoroacetate resistance. Cannot use acetyl-CoA as substrate. In Streptantibioticus cattleyicolor (Streptomyces cattleya), this protein is Fluoroacetyl-CoA thioesterase (flK).